Here is a 202-residue protein sequence, read N- to C-terminus: Holliday junction resolvase RecU (202 aa).

Positions 85, 87, 100, and 119 each coordinate Mg(2+).

It belongs to the RecU family. It depends on Mg(2+) as a cofactor.

Its subcellular location is the cytoplasm. It catalyses the reaction Endonucleolytic cleavage at a junction such as a reciprocal single-stranded crossover between two homologous DNA duplexes (Holliday junction).. Its function is as follows. Endonuclease that resolves Holliday junction intermediates in genetic recombination. Cleaves mobile four-strand junctions by introducing symmetrical nicks in paired strands. Promotes annealing of linear ssDNA with homologous dsDNA. Required for DNA repair, homologous recombination and chromosome segregation. The polypeptide is Holliday junction resolvase RecU (Streptococcus pyogenes serotype M5 (strain Manfredo)).